A 519-amino-acid chain; its full sequence is DDB1- and CUL4-associated factor 17 (519 aa).

2 helical membrane-spanning segments follow: residues Val186 to Ile206 and Gly222 to Ile242.

Interacts with DDB1, CUL4A and CUL4B. Ubiquitously expressed in the embryo, with higher expression in brain, liver and skin tissues.

The protein localises to the membrane. It localises to the nucleus. Its subcellular location is the nucleolus. It participates in protein modification; protein ubiquitination. Functionally, may function as a substrate receptor for CUL4-DDB1 E3 ubiquitin-protein ligase complex. The sequence is that of DDB1- and CUL4-associated factor 17 (Dcaf17) from Mus musculus (Mouse).